Here is an 850-residue protein sequence, read N- to C-terminus: G-type lectin S-receptor-like serine/threonine-protein kinase CES101 (850 aa).

Residues 1 to 22 (MWSNCIFLTLFTFYLFLGQSCC) form the signal peptide. Topologically, residues 23–423 (QTDTLLQGQY…IKGSKLAATW (401 aa)) are extracellular. Positions 24-144 (TDTLLQGQYL…DSDGSMKRTL (121 aa)) constitute a Bulb-type lectin domain. 4 N-linked (GlcNAc...) asparagine glycosylation sites follow: Asn55, Asn118, Asn194, and Asn374. The PAN domain maps to 334–416 (CSRFGYTFRE…PRTIYIRIKG (83 aa)). Cystine bridges form between Cys367–Cys390 and Cys371–Cys377. The chain crosses the membrane as a helical span at residues 424-444 (LVVVASLFLIIPVTWLIIYLV). Topologically, residues 445–850 (LRKFKIKGTN…RVTITVMEAR (406 aa)) are cytoplasmic. The 290-residue stretch at 527-816 (FSDANKLGEG…ALSLPKEPAF (290 aa)) folds into the Protein kinase domain. ATP-binding positions include 533 to 541 (LGEGGFGPV) and Lys555. At Ser561 the chain carries Phosphoserine. The caM-binding stretch occupies residues 616 to 633 (LRKIVLDWKLRFRIMEGI). Residue Asp652 is the Proton acceptor of the active site. Ser669 bears the Phosphoserine mark. Position 686 is a phosphothreonine (Thr686). Residues Ser730 and Ser838 each carry the phosphoserine modification. Phosphothreonine is present on Thr845.

It belongs to the protein kinase superfamily. Ser/Thr protein kinase family. In terms of tissue distribution, mostly expressed in leaves, and, to a lower extent, in roots and flowers.

It is found in the cell membrane. The enzyme catalyses L-seryl-[protein] + ATP = O-phospho-L-seryl-[protein] + ADP + H(+). It carries out the reaction L-threonyl-[protein] + ATP = O-phospho-L-threonyl-[protein] + ADP + H(+). In terms of biological role, promotes the expression of genes involved in photosynthesis at least in dedifferentiated calli. The sequence is that of G-type lectin S-receptor-like serine/threonine-protein kinase CES101 (CES101) from Arabidopsis thaliana (Mouse-ear cress).